Here is a 349-residue protein sequence, read N- to C-terminus: 3'-5' exoribonuclease 1 (349 aa).

Composition is skewed to basic and acidic residues over residues 1 to 10 (MEDPQSKEPA) and 22 to 35 (PRPE…RPSP). A disordered region spans residues 1 to 48 (MEDPQSKEPAGEAVALALLESPRPEGGEEPPRPSPEETQQCKFDGQET). Phosphoserine is present on residues serine 59 and serine 62. One can recognise an SAP domain in the interval 76 to 110 (INRMSKEELRAKLSEFKLETRGVKDVLKKRLKNYY). One can recognise an Exonuclease domain in the interval 130-306 (ICIIDFEATC…DDSKNIARIA (177 aa)). Aspartate 134 and glutamate 136 together coordinate Mg(2+). Glutamate 136 (proton acceptor) is an active-site residue. AMP contacts are provided by glutamate 136 and alanine 137. Aspartate 234 is a binding site for Mg(2+). Histidine 293 functions as the Proton acceptor in the catalytic mechanism. Histidine 293 is an AMP binding site. Mg(2+) is bound at residue aspartate 298.

Identified in a histone pre-mRNA complex, at least composed of ERI1, LSM11, SLBP, SNRPB, SYNCRIP and YBX1. Interacts in a cooperative manner with SLBP to the mature 3'-end of histone mRNAs. Binds to 40S and 60S ribosomal subunits and to 80S assembled ribosomes. Found in a ternary complex with SLBP and the stem-loop structure of the 3'-end of histone mRNAs. It depends on Mg(2+) as a cofactor.

It localises to the cytoplasm. Its subcellular location is the nucleus. The protein localises to the nucleolus. The enzyme catalyses Exonucleolytic cleavage in the 3'- to 5'-direction to yield nucleoside 5'-phosphates.. With respect to regulation, although it can bind simultaneously with SLBP to the 3'-end of histone mRNA, the presence of SLBP prevents the exonuclease activity. Its function is as follows. RNA exonuclease that binds to the 3'-end of histone mRNAs and degrades them, suggesting that it plays an essential role in histone mRNA decay after replication. A 2' and 3'-hydroxyl groups at the last nucleotide of the histone 3'-end is required for efficient 3'-end histone mRNA exonuclease activity and degradation of RNA substrates. Also able to degrade the 3'-overhangs of short interfering RNAs (siRNAs) in vitro, suggesting a possible role as regulator of RNA interference (RNAi). Required for binding the 5'-ACCCA-3' sequence present in stem-loop structure. Able to bind other mRNAs. Required for 5.8S rRNA 3'-end processing. Also binds to 5.8s ribosomal RNA. Binds with high affinity to the stem-loop structure of replication-dependent histone pre-mRNAs. In vitro, does not have sequence specificity. In vitro, has weak DNA exonuclease activity. In vitro, shows biphasic kinetics such that there is rapid hydrolysis of the last three unpaired RNA nucleotides in the 39 flanking sequence followed by a much slower cleavage through the stem that occurs over a longer incubation period in the order of hours. ERI1-mediated RNA metabolism plays a key role in chondrogenesis. This chain is 3'-5' exoribonuclease 1, found in Homo sapiens (Human).